The sequence spans 43 residues: Myotoxin-1 (43 aa).

3 disulfides stabilise this stretch: cysteine 4-cysteine 36, cysteine 11-cysteine 30, and cysteine 18-cysteine 37.

This sequence belongs to the crotamine-myotoxin family. Monomer. As to expression, expressed by the venom gland.

It localises to the secreted. Cationic peptide that possesses multiple functions. It acts as a cell-penetrating peptide (CPP), and as a potent voltage-gated potassium channel (Kv) inhibitor. It exhibits antimicrobial activities, hind limb paralysis, and severe muscle necrosis by a non-enzymatic mechanism. This is Myotoxin-1 from Crotalus concolor (Midget faded rattlesnake).